A 166-amino-acid chain; its full sequence is UPF0336 protein Mb0656 (166 aa).

Belongs to the UPF0336 family.

This Mycobacterium bovis (strain ATCC BAA-935 / AF2122/97) protein is UPF0336 protein Mb0656.